We begin with the raw amino-acid sequence, 336 residues long: Melanoma-associated antigen B17 (336 aa).

Residues 1-17 are compositionally biased toward basic residues; the sequence is MPRGQASKRRAREKRRQ. A disordered region spans residues 1–108; the sequence is MPRGQASKRR…SSSESTGRDL (108 aa). Low complexity-rich tracts occupy residues 39–54 and 62–80; these read PSSS…QSFP and SQRA…LTSS. Polar residues predominate over residues 90-103; sequence ESPNSFHGPSSSES. Positions 109–336 constitute an MAGE domain; it reads LNTKTGELVQ…RARASRSFQP (228 aa).

The polypeptide is Melanoma-associated antigen B17 (MAGEB17) (Homo sapiens (Human)).